The sequence spans 332 residues: UPF0194 membrane protein YbhG (332 aa).

A signal peptide spans 1–16; sequence MMKKPVVIGLAVVVLA. Residues 141 to 210 are a coiled coil; sequence RTISANDLEN…NLQDSTLIAP (70 aa).

The protein belongs to the UPF0194 family.

It localises to the periplasm. The protein is UPF0194 membrane protein YbhG (ybhG) of Shigella flexneri.